The primary structure comprises 309 residues: uncharacterized protein (309 aa).

The segment at 272–291 (PSLDAPSETVEAFPEPQKNL) is disordered.

This is an uncharacterized protein from Bacillus subtilis (strain 168).